The primary structure comprises 273 residues: Multidrug-efflux transporter 2 regulator (273 aa).

An HTH merR-type domain is found at Y8–G77. The H-T-H motif DNA-binding region spans T11–E30.

Its function is as follows. Activates transcription of the blt gene in response to structurally dissimilar drugs. This is Multidrug-efflux transporter 2 regulator (bltR) from Bacillus subtilis (strain 168).